The primary structure comprises 207 residues: Large ribosomal subunit protein uL3c (207 aa).

Residues 115 to 151 (IGKGFAGNQKRHNFSRGPMTHGSKNHRLPGSIGAGST) are disordered.

This sequence belongs to the universal ribosomal protein uL3 family. As to quaternary structure, part of the 50S ribosomal subunit.

It localises to the plastid. It is found in the chloroplast. Its function is as follows. One of the primary rRNA binding proteins, it binds directly near the 3'-end of the 23S rRNA, where it nucleates assembly of the 50S subunit. The sequence is that of Large ribosomal subunit protein uL3c (rpl3) from Emiliania huxleyi (Coccolithophore).